Consider the following 226-residue polypeptide: UPF0111 protein HI_1603 (226 aa).

Belongs to the UPF0111 family.

The polypeptide is UPF0111 protein HI_1603 (Haemophilus influenzae (strain ATCC 51907 / DSM 11121 / KW20 / Rd)).